A 501-amino-acid polypeptide reads, in one-letter code: Ribonuclease Y (501 aa).

The helical transmembrane segment at 7–27 (LVVIALLGALTLLTAGHVLAL) threads the bilayer. The KH domain maps to 190–256 (VVRAVPLPEE…RLTLEKLVAD (67 aa)). The region spanning 316-409 (VLAHLVESAH…TQAADAISGG (94 aa)) is the HD domain.

Belongs to the RNase Y family.

Its subcellular location is the cell membrane. Functionally, endoribonuclease that initiates mRNA decay. In Thermobifida fusca (strain YX), this protein is Ribonuclease Y.